We begin with the raw amino-acid sequence, 83 residues long: Small ribosomal subunit protein bS16 (83 aa).

The protein belongs to the bacterial ribosomal protein bS16 family.

In Pseudomonas fluorescens (strain ATCC BAA-477 / NRRL B-23932 / Pf-5), this protein is Small ribosomal subunit protein bS16.